The primary structure comprises 385 residues: AA13 family lytic polysaccharide monooxygenase aasA (385 aa).

The signal sequence occupies residues 1 to 18; it reads MKSLLALVAGNLVTAVSG. His19 provides a ligand contact to Cu(2+). His19 bears the Methylhistidine mark. An N-terminal catalytic module region spans residues 19–248; the sequence is HGYLTVPASR…AQVYLHCADI (230 aa). 7 cysteine pairs are disulfide-bonded: Cys40-Cys43, Cys66-Cys245, Cys102-Cys203, Cys118-Cys145, Cys153-Cys161, Cys167-Cys173, and Cys181-Cys192. Residue His109 coordinates Cu(2+). An N-linked (GlcNAc...) asparagine glycan is attached at Asn120. Position 242 (Tyr242) interacts with Cu(2+). Residues 254-276 form a disordered region; that stretch reads SGSSPSPTSTTSTATSTTTPSST. A compositionally biased stretch (low complexity) spans 256 to 276; that stretch reads SSPSPTSTTSTATSTTTPSST. A CBM20 domain is found at 278 to 385; the sequence is CASAISIPVT…TTATESGAWR (108 aa). N-linked (GlcNAc...) asparagine glycosylation occurs at Asn364.

It belongs to the polysaccharide monooxygenase AA13 family. It depends on Cu(2+) as a cofactor. The catalytically essential N-terminal histidine His-19 is post-translationally modified by methylation to prevent protonation of the histidine side chain, and protect the critical active site of the enzyme from oxidative damage.

Its subcellular location is the secreted. It catalyses the reaction starch + reduced acceptor + O2 = D-glucono-1,5-lactone-terminated malto-oligosaccharides + short-chain malto-oligosaccharides + acceptor + H2O.. Starch-active polysaccharide monooxygenase that oxidizes the C1 position of starch substrates, but not in cellulose, chitin, polygalacturonan or esterified pectin, nor with Arabidopsis stem cell walls. Catalysis by LPMOs requires the reduction of the active-site copper from Cu(II) to Cu(I) by a reducing agent and H(2)O(2) or O(2) as a cosubstrate. The sequence is that of AA13 family lytic polysaccharide monooxygenase aasA from Emericella nidulans (strain FGSC A4 / ATCC 38163 / CBS 112.46 / NRRL 194 / M139) (Aspergillus nidulans).